The following is a 220-amino-acid chain: Octanoyltransferase (220 aa).

The BPL/LPL catalytic domain maps to 27–208 (PGTADEIWLC…QLARAHGQAV (182 aa)). Substrate-binding positions include 66–73 (RGGQVTYH), 139–141 (ALG), and 152–154 (GLA). The active-site Acyl-thioester intermediate is C170.

It belongs to the LipB family.

Its subcellular location is the cytoplasm. It carries out the reaction octanoyl-[ACP] + L-lysyl-[protein] = N(6)-octanoyl-L-lysyl-[protein] + holo-[ACP] + H(+). Its pathway is protein modification; protein lipoylation via endogenous pathway; protein N(6)-(lipoyl)lysine from octanoyl-[acyl-carrier-protein]: step 1/2. Catalyzes the transfer of endogenously produced octanoic acid from octanoyl-acyl-carrier-protein onto the lipoyl domains of lipoate-dependent enzymes. Lipoyl-ACP can also act as a substrate although octanoyl-ACP is likely to be the physiological substrate. This chain is Octanoyltransferase, found in Bordetella bronchiseptica (strain ATCC BAA-588 / NCTC 13252 / RB50) (Alcaligenes bronchisepticus).